We begin with the raw amino-acid sequence, 326 residues long: Virulence-associated V antigen (326 aa).

It localises to the secreted. In terms of biological role, involved in calcium regulation of yop expression, which includes the export process. The chain is Virulence-associated V antigen (lcrV) from Yersinia pseudotuberculosis serotype I (strain IP32953).